Reading from the N-terminus, the 346-residue chain is CLOCK-interacting pacemaker (346 aa).

The segment covering 1–42 (MEKNQKCATEQERFKARSGHGDGQRAEPRKTQTTTESDKDSG) has biased composition (basic and acidic residues). Disordered stretches follow at residues 1–83 (MEKN…SQPQ) and 167–228 (CARK…KELD). Polar residues predominate over residues 50 to 68 (CLSSVEQTDTEEGPTTSRW). Residues 179 to 192 (NQTKRQCSKGHSGS) are compositionally biased toward basic residues. Residues 205-222 (GVQQGPVDQNVKESSVSA) are compositionally biased toward polar residues. Positions 283–315 (MKTKELARHNQATQSQLEKLQEQVQLYATAMSS) form a coiled coil.

It localises to the nucleus. Its subcellular location is the cytoplasm. The protein resides in the cytosol. In terms of biological role, transcriptional repressor which acts as a negative-feedback regulator of CLOCK-BMAL1 transcriptional activity in the circadian-clock mechanism. The physiological relevance of these observations is unsure. This Xenopus laevis (African clawed frog) protein is CLOCK-interacting pacemaker (cipc).